Reading from the N-terminus, the 319-residue chain is Acetyl-coenzyme A carboxylase carboxyl transferase subunit alpha (319 aa).

The CoA carboxyltransferase C-terminal domain maps to 38–293 (HALQDKLRLR…KAVLLNELDA (256 aa)).

It belongs to the AccA family. In terms of assembly, acetyl-CoA carboxylase is a heterohexamer composed of biotin carboxyl carrier protein (AccB), biotin carboxylase (AccC) and two subunits each of ACCase subunit alpha (AccA) and ACCase subunit beta (AccD).

The protein resides in the cytoplasm. It carries out the reaction N(6)-carboxybiotinyl-L-lysyl-[protein] + acetyl-CoA = N(6)-biotinyl-L-lysyl-[protein] + malonyl-CoA. It participates in lipid metabolism; malonyl-CoA biosynthesis; malonyl-CoA from acetyl-CoA: step 1/1. Its function is as follows. Component of the acetyl coenzyme A carboxylase (ACC) complex. First, biotin carboxylase catalyzes the carboxylation of biotin on its carrier protein (BCCP) and then the CO(2) group is transferred by the carboxyltransferase to acetyl-CoA to form malonyl-CoA. The sequence is that of Acetyl-coenzyme A carboxylase carboxyl transferase subunit alpha from Stenotrophomonas maltophilia (strain R551-3).